A 295-amino-acid chain; its full sequence is NAD kinase (295 aa).

Aspartate 72 acts as the Proton acceptor in catalysis. Residues 72-73 (DG), 146-147 (ND), arginine 157, lysine 174, aspartate 176, 187-192 (TAYALS), and glutamine 247 contribute to the NAD(+) site.

This sequence belongs to the NAD kinase family. A divalent metal cation is required as a cofactor.

It is found in the cytoplasm. It catalyses the reaction NAD(+) + ATP = ADP + NADP(+) + H(+). In terms of biological role, involved in the regulation of the intracellular balance of NAD and NADP, and is a key enzyme in the biosynthesis of NADP. Catalyzes specifically the phosphorylation on 2'-hydroxyl of the adenosine moiety of NAD to yield NADP. The sequence is that of NAD kinase from Ectopseudomonas mendocina (strain ymp) (Pseudomonas mendocina).